The following is a 241-amino-acid chain: Phosphoadenosine 5'-phosphosulfate reductase (241 aa).

The Nucleophile; cysteine thiosulfonate intermediate role is filled by Cys-235.

It belongs to the PAPS reductase family. CysH subfamily.

The protein localises to the cytoplasm. The catalysed reaction is [thioredoxin]-disulfide + sulfite + adenosine 3',5'-bisphosphate + 2 H(+) = [thioredoxin]-dithiol + 3'-phosphoadenylyl sulfate. It functions in the pathway sulfur metabolism; hydrogen sulfide biosynthesis; sulfite from sulfate: step 3/3. Its function is as follows. Catalyzes the formation of sulfite from phosphoadenosine 5'-phosphosulfate (PAPS) using thioredoxin as an electron donor. This chain is Phosphoadenosine 5'-phosphosulfate reductase, found in Xanthomonas axonopodis pv. citri (strain 306).